A 726-amino-acid polypeptide reads, in one-letter code: Catalase-peroxidase (726 aa).

Positions 91 to 214 (WHAAGTYRIG…LAAVQMGLIY (124 aa)) form a cross-link, tryptophyl-tyrosyl-methioninium (Trp-Tyr) (with M-240). Catalysis depends on H92, which acts as the Proton acceptor. The tryptophyl-tyrosyl-methioninium (Tyr-Met) (with W-91) cross-link spans 214–240 (YVNPEGPNGNPDPVAAAIDIRETFRRM). Heme b is bound at residue H255. The disordered stretch occupies residues 335–362 (AHQWKPKGNAGAGTVPDPADPSKRRSPS).

This sequence belongs to the peroxidase family. Peroxidase/catalase subfamily. As to quaternary structure, homodimer or homotetramer. Requires heme b as cofactor. In terms of processing, formation of the three residue Trp-Tyr-Met cross-link is important for the catalase, but not the peroxidase activity of the enzyme.

It catalyses the reaction H2O2 + AH2 = A + 2 H2O. It carries out the reaction 2 H2O2 = O2 + 2 H2O. Bifunctional enzyme with both catalase and broad-spectrum peroxidase activity. This chain is Catalase-peroxidase, found in Cupriavidus metallidurans (strain ATCC 43123 / DSM 2839 / NBRC 102507 / CH34) (Ralstonia metallidurans).